A 432-amino-acid chain; its full sequence is Glutamate-1-semialdehyde 2,1-aminomutase (432 aa).

Lys270 is modified (N6-(pyridoxal phosphate)lysine).

This sequence belongs to the class-III pyridoxal-phosphate-dependent aminotransferase family. HemL subfamily. As to quaternary structure, homodimer. Pyridoxal 5'-phosphate is required as a cofactor.

The protein resides in the cytoplasm. The enzyme catalyses (S)-4-amino-5-oxopentanoate = 5-aminolevulinate. The protein operates within porphyrin-containing compound metabolism; protoporphyrin-IX biosynthesis; 5-aminolevulinate from L-glutamyl-tRNA(Glu): step 2/2. This chain is Glutamate-1-semialdehyde 2,1-aminomutase, found in Acinetobacter baylyi (strain ATCC 33305 / BD413 / ADP1).